The chain runs to 84 residues: Large ribosomal subunit protein bL31B (84 aa).

This sequence belongs to the bacterial ribosomal protein bL31 family. Type B subfamily. Part of the 50S ribosomal subunit.

The protein is Large ribosomal subunit protein bL31B of Streptomyces griseus subsp. griseus (strain JCM 4626 / CBS 651.72 / NBRC 13350 / KCC S-0626 / ISP 5235).